The chain runs to 214 residues: Adenylate kinase (214 aa).

10–15 (GAGKGT) is a binding site for ATP. An NMP region spans residues 30 to 59 (STGDMLRAAIKAGTELGKQAKSVIDAGQLV). Residues Thr31, Arg36, 57 to 59 (QLV), 85 to 88 (GFPR), and Gln92 each bind AMP. The LID stretch occupies residues 122–159 (GRRAHLPSGRTYHNVYNPPKEEGKDDITGEELVVRDDD). Residues Arg123 and 132 to 133 (TY) contribute to the ATP site. Arg156 and Arg167 together coordinate AMP. Lys200 provides a ligand contact to ATP.

This sequence belongs to the adenylate kinase family. Monomer.

Its subcellular location is the cytoplasm. The catalysed reaction is AMP + ATP = 2 ADP. It participates in purine metabolism; AMP biosynthesis via salvage pathway; AMP from ADP: step 1/1. In terms of biological role, catalyzes the reversible transfer of the terminal phosphate group between ATP and AMP. Plays an important role in cellular energy homeostasis and in adenine nucleotide metabolism. This Vibrio atlanticus (strain LGP32) (Vibrio splendidus (strain Mel32)) protein is Adenylate kinase.